The following is a 576-amino-acid chain: Lipoprotein LpqB (576 aa).

An N-terminal signal peptide occupies residues 1 to 16; that stretch reads MRRVTRTIAAAGAAIA. Cys17 carries N-palmitoyl cysteine lipidation. A lipid anchor (S-diacylglycerol cysteine) is attached at Cys17.

The protein belongs to the LpqB lipoprotein family.

The protein resides in the cell membrane. The sequence is that of Lipoprotein LpqB from Bifidobacterium longum (strain NCC 2705).